Here is a 375-residue protein sequence, read N- to C-terminus: 23S rRNA (uracil(747)-C(5))-methyltransferase RlmC (375 aa).

Residues C3, C11, C14, and C87 each contribute to the [4Fe-4S] cluster site. S-adenosyl-L-methionine-binding residues include Q212, F241, E262, and N307. Residue C334 is the Nucleophile of the active site.

The protein belongs to the class I-like SAM-binding methyltransferase superfamily. RNA M5U methyltransferase family. RlmC subfamily.

The enzyme catalyses uridine(747) in 23S rRNA + S-adenosyl-L-methionine = 5-methyluridine(747) in 23S rRNA + S-adenosyl-L-homocysteine + H(+). Its function is as follows. Catalyzes the formation of 5-methyl-uridine at position 747 (m5U747) in 23S rRNA. This is 23S rRNA (uracil(747)-C(5))-methyltransferase RlmC from Yersinia enterocolitica serotype O:8 / biotype 1B (strain NCTC 13174 / 8081).